An 839-amino-acid chain; its full sequence is Taste receptor type 1 member 2 (839 aa).

Residues 1-19 (MGTRATTICSLFFLLWVLA) form the signal peptide. Topologically, residues 20–566 (EPAENSDFYL…VFLEWHEAPT (547 aa)) are extracellular. N84, N248, N292, N312, N368, N407, N428, N487, and N527 each carry an N-linked (GlcNAc...) asparagine glycan. A helical transmembrane segment spans residues 567–587 (IAVALLAALGFLSTLAILVIF). Over 588–602 (WRHFQTPIVRSAGGP) the chain is Cytoplasmic. A helical transmembrane segment spans residues 603 to 623 (MCFLMLTLLLVAYMVVPVYVG). Residues 624–635 (PPKVSTCLCRQA) are Extracellular-facing. A helical transmembrane segment spans residues 636-656 (LFPLCFTICISCIAVRSFQIV). At 657 to 681 (CAFKMASRFPRAYSYWVRYQGPYVS) the chain is on the cytoplasmic side. A helical membrane pass occupies residues 682-702 (MAFITVLKMVIVVIGMLATGL). Over 703 to 727 (SPTTRTDPDDPKITIVSCNPNYRNS) the chain is Extracellular. A helical membrane pass occupies residues 728–748 (LLFNTSLDLLLSVVGFSFAYM). Over 749 to 760 (GKELPTNYNEAK) the chain is Cytoplasmic. A helical transmembrane segment spans residues 761–781 (FITLSMTFYFTSSVSLCTFMS). Over 782 to 784 (AYS) the chain is Extracellular. Residues 785–805 (GVLVTIVDLLVTVLNLLAISL) traverse the membrane as a helical segment. The Cytoplasmic portion of the chain corresponds to 806-839 (GYFGPKCYMILFYPERNTPAYFNSMIQGYTMRRD).

The protein belongs to the G-protein coupled receptor 3 family. TAS1R subfamily. In terms of assembly, forms heterodimers with TAS1R3.

The protein resides in the cell membrane. Its function is as follows. Putative taste receptor. TAS1R2/TAS1R3 recognizes diverse natural and synthetic sweeteners. This chain is Taste receptor type 1 member 2 (TAS1R2), found in Gorilla gorilla gorilla (Western lowland gorilla).